Reading from the N-terminus, the 568-residue chain is NADPH oxidase 3 (568 aa).

At 1–13 (MMGCWILNEGLST) the chain is on the cytoplasmic side. The chain crosses the membrane as a helical span at residues 14 to 34 (ILVLSWLGINFYLFIDTFYWY). At 35 to 51 (EEEESFHYTRVILGSTL) the chain is on the extracellular side. Residues 52–72 (AWARASALCLNFNCMLILIPV) form a helical membrane-spanning segment. The Ferric oxidoreductase domain occupies 55-284 (RASALCLNFN…VVLYACERII (230 aa)). At 73–103 (SRNLISFIRGTSICCRGPWRRQLDKNLRFHK) the chain is on the cytoplasmic side. The chain crosses the membrane as a helical span at residues 104 to 124 (LVAYGIAVNATIHIVAHFFNL). The Extracellular portion of the chain corresponds to 125-167 (ERYHWSQSEEAQGLLAALSKLGNTPNESYLNPVRTFPTNTTTE). Asn163 carries N-linked (GlcNAc...) asparagine glycosylation. A helical transmembrane segment spans residues 168 to 188 (LLRTIAGVTGLVISLALVLIM). Topologically, residues 189–201 (TSSTEFIRQASYE) are cytoplasmic. A helical membrane pass occupies residues 202–222 (LFWYTHHVFIVFFLSLAIHGT). Residues 223–395 (GRIVRGQTQD…DGPFGTALTD (173 aa)) lie on the Extracellular side of the membrane. An N-linked (GlcNAc...) asparagine glycan is attached at Asn238. One can recognise an FAD-binding FR-type domain in the interval 285 to 395 (RFWRFQQEVV…DGPFGTALTD (111 aa)). The helical transmembrane segment at 396–416 (VFHYPVCVCVAAGIGVTPFAA) threads the bilayer. Topologically, residues 417–568 (LLKSIWYKCS…VHFYYNKESF (152 aa)) are cytoplasmic.

Interacts with CYBA/p22phox. Heterodimerization with CYBA/p22phox is essential for its activity and cell membrane localization. Heme serves as cofactor. In terms of processing, N-glycosylated in a CYBA/p22phox-dependent manner.

The protein localises to the cell membrane. The enzyme catalyses NADPH + 2 O2 = 2 superoxide + NADP(+) + H(+). With respect to regulation, activated by the ototoxic drug cisplatin. Activated by NOXO1. Cooperatively activated by NCF1 and NCF2 or NOXA1 in a phorbol 12-myristate 13-acetate (PMA)-dependent manner. Inhibited by diphenyleneiodonium chloride. In terms of biological role, NADPH oxidase that catalyzes the generation of superoxide from molecular oxygen utilizing NADPH as an electron donor, upon formation of a complex with CYBA/p22phox. Plays a role in the biogenesis of otoconia/otolith, which are crystalline structures of the inner ear involved in the perception of gravity. This chain is NADPH oxidase 3 (NOX3), found in Homo sapiens (Human).